The sequence spans 61 residues: Large ribosomal subunit protein uL30 (61 aa).

The protein belongs to the universal ribosomal protein uL30 family. As to quaternary structure, part of the 50S ribosomal subunit.

The protein is Large ribosomal subunit protein uL30 of Bifidobacterium longum (strain DJO10A).